A 231-amino-acid polypeptide reads, in one-letter code: Ion-translocating oxidoreductase complex subunit E (231 aa).

The next 6 helical transmembrane spans lie at 18–38 (ALVQLLGLCPLLAVTSTATNA), 39–59 (LGLGLATTLVLTLTNLTISTL), 63–83 (TPAEIRIPIYVMIIASVVSAV), 86–106 (LINAYAFGLYQSLGIFIPLIV), 125–145 (ALSALDGFSIGTGATCAMFVL), and 182–202 (PFLLAMLPPGAFIGLGLMLAG).

Belongs to the NqrDE/RnfAE family. As to quaternary structure, the complex is composed of six subunits: RsxA, RsxB, RsxC, RsxD, RsxE and RsxG.

Its subcellular location is the cell inner membrane. Part of a membrane-bound complex that couples electron transfer with translocation of ions across the membrane. Required to maintain the reduced state of SoxR. This Shigella flexneri serotype 5b (strain 8401) protein is Ion-translocating oxidoreductase complex subunit E.